Here is a 339-residue protein sequence, read N- to C-terminus: Fructose-1,6-bisphosphatase isozyme 2 (339 aa).

Positions 3–10 (DRSPFETD) are important for interaction with ALDOA. AMP is bound by residues Val-18 and 28-32 (TGELT). 2 residues coordinate Mg(2+): Asp-69 and Glu-98. 113 to 114 (KY) is a binding site for AMP. Asp-119, Leu-121, and Asp-122 together coordinate Mg(2+). A substrate-binding site is contributed by Asp-122. Arg-141 serves as a coordination point for AMP. The Nuclear localization signal motif lies at 204 to 208 (KKKGK). 213 to 216 (NEGY) contacts substrate. Tyr-216 and Tyr-219 each carry phosphotyrosine. Residues 245–249 (YVGSM), Tyr-265, and Lys-275 contribute to the substrate site. A Mg(2+)-binding site is contributed by Glu-281.

It belongs to the FBPase class 1 family. Homotetramer. Interacts with ALDOA; the interaction blocks inhibition by physiological concentrations of AMP and reduces inhibition by Ca(2+). Interacts with alpha-actinin and F-actin. Mg(2+) serves as cofactor.

Its subcellular location is the cell junction. It is found in the cytoplasm. The protein resides in the nucleus. It localises to the myofibril. The protein localises to the sarcomere. Its subcellular location is the z line. The enzyme catalyses beta-D-fructose 1,6-bisphosphate + H2O = beta-D-fructose 6-phosphate + phosphate. It participates in carbohydrate biosynthesis; gluconeogenesis. Subject to complex allosteric regulation. The enzyme can assume an active R-state, or an inactive T-state. Intermediate conformations may exist. AMP acts as an allosteric inhibitor. Fructose 2,6-bisphosphate acts as a competitive inhibitor. Strongly inhibited by Ca(2+). Its function is as follows. Catalyzes the hydrolysis of fructose 1,6-bisphosphate to fructose 6-phosphate in the presence of divalent cations and probably participates in glycogen synthesis from carbohydrate precursors, such as lactate. The polypeptide is Fructose-1,6-bisphosphatase isozyme 2 (Fbp2) (Rattus norvegicus (Rat)).